The sequence spans 588 residues: Probable cytochrome c oxidase subunit 1-beta (588 aa).

The interval 1 to 26 is disordered; sequence MTATPAQRRPALPATRPYPARHGPKG. Residues 43–63 traverse the membrane as a helical segment; the sequence is VLYLVSATGFFLIGGLLALLM. Histidine 87 lines the Fe(II)-heme a pocket. Transmembrane regions (helical) follow at residues 90–110, 128–148, 171–191, 214–234, 259–279, and 291–311; these read IMLL…VLPL, WLYL…GGAA, LWIL…VNMI, ILIT…ALMA, LFWF…FGII, and IFGY…SMAV. Residues histidine 265 and tyrosine 269 each contribute to the Cu cation site. A cross-link (1'-histidyl-3'-tyrosine (His-Tyr)) is located at residues 265 to 269; sequence HPEVY. Histidine 314 and histidine 315 together coordinate Cu cation. 2 helical membrane passes run 320 to 340 and 360 to 380; these read GAVL…PTGV and MLFA…GVIL. Histidine 398 provides a ligand contact to heme a3. 3 consecutive transmembrane segments (helical) span residues 399-419, 434-454, and 477-497; these read FHYV…YFWF, LHFW…HWLG, and VSTI…WNGF. Histidine 400 is a Fe(II)-heme a binding site. Residues 557 to 588 are disordered; the sequence is AEAHAGRRAGHGAGAELSVPSTVATKDDDHTS.

Belongs to the heme-copper respiratory oxidase family. In terms of assembly, associates with subunits II, III and IV to form cytochrome c oxidase. Cu(2+) serves as cofactor. It depends on heme as a cofactor.

The protein localises to the cell membrane. The enzyme catalyses 4 Fe(II)-[cytochrome c] + O2 + 8 H(+)(in) = 4 Fe(III)-[cytochrome c] + 2 H2O + 4 H(+)(out). The protein operates within energy metabolism; oxidative phosphorylation. Its function is as follows. Cytochrome c oxidase is the component of the respiratory chain that catalyzes the reduction of oxygen to water. Subunits 1-3 form the functional core of the enzyme complex. CO I is the catalytic subunit of the enzyme. Electrons originating in cytochrome c are transferred via the copper A center of subunit 2 and heme A of subunit 1 to the bimetallic center formed by heme A3 and copper B. This Nocardia farcinica (strain IFM 10152) protein is Probable cytochrome c oxidase subunit 1-beta (ctaD2).